The primary structure comprises 199 residues: GTP cyclohydrolase-2 (199 aa).

Arginine 49 to glutamate 53 lines the GTP pocket. Residues cysteine 54, cysteine 65, and cysteine 67 each coordinate Zn(2+). GTP contacts are provided by residues glutamine 70, glutamate 92 to arginine 94, and threonine 114. Catalysis depends on aspartate 126, which acts as the Proton acceptor. Residue arginine 128 is the Nucleophile of the active site. Residues threonine 149 and lysine 154 each contribute to the GTP site.

The protein belongs to the GTP cyclohydrolase II family. In terms of assembly, homodimer. The cofactor is Zn(2+).

The enzyme catalyses GTP + 4 H2O = 2,5-diamino-6-hydroxy-4-(5-phosphoribosylamino)-pyrimidine + formate + 2 phosphate + 3 H(+). The protein operates within cofactor biosynthesis; riboflavin biosynthesis; 5-amino-6-(D-ribitylamino)uracil from GTP: step 1/4. Catalyzes the conversion of GTP to 2,5-diamino-6-ribosylamino-4(3H)-pyrimidinone 5'-phosphate (DARP), formate and pyrophosphate. The protein is GTP cyclohydrolase-2 of Blochmanniella pennsylvanica (strain BPEN).